Consider the following 2618-residue polypeptide: Mediator of RNA polymerase II transcription subunit 13 (2618 aa).

Low complexity-rich tracts occupy residues 232–255, 509–519, and 532–543; these read FAAASSPPGSNGSAASAGGAVPNP, TPASGTGSLSA, and DSKQLVQQQIQQ. Disordered stretches follow at residues 232–279, 509–543, 569–731, 916–957, 970–995, 1036–1055, 1268–1384, 1521–1557, 1614–1633, and 1985–2060; these read FAAA…AAPP, TPASGTGSLSADGDENEQNKPPQDSKQLVQQQIQQ, GNTP…SGGP, LNIK…AEGL, TSSNDECSSVQIHTPPDSNNPSNGGC, TKMFPTPPSHEQQHPNSSPC, PRTP…TGVV, ASASMPGAGSGHGHGPNGGSNSSSCTPPSSNPHITGY, SRKNQNKQGPGETSSALDKI, and KTLL…GETK. Threonine 571 and threonine 575 each carry phosphothreonine. Composition is skewed to polar residues over residues 581–590, 634–643, and 669–681; these read STYSRNSLGG, APTSVSNLQQ, and SITASPYVHQTPS. The span at 692–706 shows a compositional bias: gly residues; the sequence is AGGGPAGGQGLGTGP. Residues 711 to 723 show a composition bias toward low complexity; it reads AQQPATPTAATSA. Residues 939-949 show a composition bias toward gly residues; it reads NSSGGGSGSGG. Residues 1272 to 1295 are compositionally biased toward polar residues; sequence LTPSTVPQPLSSGGSQYLLNQLNC. Composition is skewed to gly residues over residues 1375–1384 and 1528–1538; these read GLGGGATGVV and AGSGHGHGPNG. Over residues 1539–1553 the composition is skewed to low complexity; it reads GSNSSSCTPPSSNPH. Positions 1614–1629 are enriched in polar residues; the sequence is SRKNQNKQGPGETSSA. The segment covering 1993-2014 has biased composition (low complexity); sequence GSGNSHSKGGSSCSSNSSSVSG. Serine 2472 and serine 2475 each carry phosphoserine.

It belongs to the Mediator complex subunit 13 family. In terms of assembly, component of the Cdk8 module of the Mediator complex, composed of CycC, Cdk8, kto and skd.

It is found in the nucleus. Functionally, component of the Mediator complex, a coactivator involved in the regulated transcription of nearly all RNA polymerase II-dependent genes. Mediator functions as a bridge to convey information from gene-specific regulatory proteins to the basal RNA polymerase II transcription machinery. Mediator is recruited to promoters by direct interactions with regulatory proteins and serves as a scaffold for the assembly of a functional preinitiation complex with RNA polymerase II and the general transcription factors. Required for leg and eye development and macrochaete specification or differentiation. Negatively regulates sex comb development. Required for activated transcription of the MtnB and MtnD genes. The chain is Mediator of RNA polymerase II transcription subunit 13 (skd) from Drosophila melanogaster (Fruit fly).